The primary structure comprises 1337 residues: Zinc finger protein 335 (1337 aa).

2 disordered regions span residues 1–108 (MEEN…LVHS) and 198–226 (GPTS…PPAP). 2 stretches are compositionally biased toward low complexity: residues 31–45 (TSEA…AATV) and 54–63 (SGVGQSSDGG). The C2H2-type 1 zinc-finger motif lies at 248–271 (FKCKMCQYRSSTKATLLRHMRERH). Positions 278-444 (AAAAATGKRG…PPRRRGRPSR (167 aa)) are disordered. A compositionally biased stretch (acidic residues) spans 302-332 (DRPEEEEEDDDIVDAGAIDDLEEDSDYNPAE). Residues 351–362 (RPRRRPGRPRKL) show a composition bias toward basic residues. Positions 363-372 (PRLETSDLHD) are enriched in basic and acidic residues. The segment covering 378-388 (LVSSQSTQSPP) has biased composition (polar residues). 8 C2H2-type zinc fingers span residues 466–488 (YLCR…VNSH), 496–518 (FRCL…MFNH), 524–546 (YKCD…AAVH), 563–585 (FPCP…MKTH), 591–613 (HMCD…LLTH), 622–644 (FKCE…QLSH), 650–673 (FKCS…AVKH), and 679–702 (FACE…RCRH). 2 disordered regions span residues 733-767 (LKQQ…TPPL) and 963-999 (QCGG…ASHT). Residues 741–756 (PGPPLSSPGPEAPQEP) show a composition bias toward pro residues. A phosphoserine mark is found at serine 976 and serine 1007. C2H2-type zinc fingers lie at residues 1019–1041 (FSCK…KRAH), 1047–1069 (FKCP…MAQH), 1075–1097 (HQCN…MLTH), and 1103–1126 (FSCH…QRLH). Lysine 1022 is covalently cross-linked (Glycyl lysine isopeptide (Lys-Gly) (interchain with G-Cter in SUMO2)). Serine 1149 carries the phosphoserine modification.

It belongs to the krueppel C2H2-type zinc-finger protein family. In terms of assembly, interacts with NCOA6; may enhance ligand-dependent transcriptional activation by nuclear hormone receptors. Interacts with CNOT6. Interacts with CNOT9; the interaction is direct. Component of a nuclear receptor-mediated transcription complex composed of at least ZNF335, CCAR2 and EMSY; the complex stimulates the transcription of nuclear receptor target genes such as SOX9 and HOXA1. Within the complex interacts with EMSY and interacts (via C-terminus) with CCAR2. Interacts with members of histone H3'Lys4'(H3K4) methyltransferase complexes ASH2L, CXXC1, KMT2A/MLL1, RBBP5, SETD1A and WDR5. Component of a histone methylation complex composed of at least ZNF335, RBBP5, ASH2L and WDR5; the complex may have histone H3-specific methyltransferase activity, however does not have specificity for 'Lys-4' of histone H3. Interacts with RBBP5 and WDR5. Interacts with ASHL2. Components of this complex may associate with components of the ZNF335-CCAR2-EMSY nuclear receptor-mediated transcription complex to form a complex at least composed of ZNF335, HCFC1, CCAR2, EMSY, MKI67, RBBP5, ASH2L and WDR5. Within this complex also interacts with HCFC1 and MKI67. As to expression, expressed at low levels in cerebral cortex, hippocampus and cerebellum (at protein level).

Its subcellular location is the nucleus. Its function is as follows. Component or associated component of some histone methyltransferase complexes may regulate transcription through recruitment of those complexes on gene promoters. Enhances ligand-dependent transcriptional activation by nuclear hormone receptors. Plays an important role in neural progenitor cell proliferation and self-renewal through the regulation of specific genes involved brain development, including REST. Also controls the expression of genes involved in somatic development and regulates, for instance, lymphoblast proliferation. The sequence is that of Zinc finger protein 335 (Znf335) from Mus musculus (Mouse).